We begin with the raw amino-acid sequence, 324 residues long: Adenine deaminase (324 aa).

His-11, His-13, and His-189 together coordinate Zn(2+). Glu-192 acts as the Proton donor in catalysis. Zn(2+) is bound at residue Asp-270. Residue Asp-271 coordinates substrate.

It belongs to the metallo-dependent hydrolases superfamily. Adenosine and AMP deaminases family. Adenine deaminase type 2 subfamily. Zn(2+) is required as a cofactor.

It carries out the reaction adenine + H2O + H(+) = hypoxanthine + NH4(+). Its function is as follows. Catalyzes the hydrolytic deamination of adenine to hypoxanthine. Plays an important role in the purine salvage pathway and in nitrogen catabolism. This is Adenine deaminase from Rhizobium meliloti (strain 1021) (Ensifer meliloti).